The sequence spans 391 residues: Putative glutamate--cysteine ligase 2-2 (391 aa).

The protein belongs to the glutamate--cysteine ligase type 2 family. YbdK subfamily.

It carries out the reaction L-cysteine + L-glutamate + ATP = gamma-L-glutamyl-L-cysteine + ADP + phosphate + H(+). In terms of biological role, ATP-dependent carboxylate-amine ligase which exhibits weak glutamate--cysteine ligase activity. The sequence is that of Putative glutamate--cysteine ligase 2-2 from Saccharopolyspora erythraea (strain ATCC 11635 / DSM 40517 / JCM 4748 / NBRC 13426 / NCIMB 8594 / NRRL 2338).